The sequence spans 150 residues: FCS-Like Zinc finger 15 (150 aa).

The span at 12–28 (NNNNNNNNNNNNNNNKN) shows a compositional bias: low complexity. The disordered stretch occupies residues 12-31 (NNNNNNNNNNNNNNNKNPLS). An FLZ-type zinc finger spans residues 67–111 (GFLEHCFLCRRKLLPAKDIYMYKGDRAFCSVECRSKQMIMDEEES). Positions 129–150 (SPATAPSRYRRDPRNQAGGFAY) are disordered.

Belongs to the FLZ family. As to quaternary structure, interacts with KIN10 and KIN11 via its FLZ-type zinc finger domain. Interacts with KINB1 and KINB3 via its N-terminal part. Forms homodimer and heterodimer with FLZ1, FLZ2 and FLZ7 in vitro.

The protein localises to the cytoplasm. Its subcellular location is the P-body. Its function is as follows. May act as an adapter to facilitate the interaction of SnRK1 complex with effector proteins, conferring tissue- and stimulus-type specific differences in the SnRK1 regulation pathway. This Arabidopsis thaliana (Mouse-ear cress) protein is FCS-Like Zinc finger 15.